Consider the following 192-residue polypeptide: uncharacterized protein (192 aa).

Positions C53–C111 form a coiled coil.

This is an uncharacterized protein from Aquifex aeolicus (strain VF5).